Reading from the N-terminus, the 493-residue chain is Vacuolar-processing enzyme (493 aa).

Positions 1-19 (MGSSQLSTLLFFTIVVTFL) are cleaved as a signal peptide. N-linked (GlcNAc...) asparagine glycosylation occurs at Asn-147. His-174 is an active-site residue. Catalysis depends on Cys-216, which acts as the Nucleophile. Cys-249 and Cys-263 are joined by a disulfide. N-linked (GlcNAc...) asparagine glycosylation is found at Asn-295 and Asn-331. Cystine bridges form between Cys-429-Cys-459 and Cys-441-Cys-476.

Belongs to the peptidase C13 family.

Asparagine-specific endopeptidase involved in the processing of vacuolar seed protein precursors into the mature forms. In Vicia sativa (Spring vetch), this protein is Vacuolar-processing enzyme.